The following is a 569-amino-acid chain: Vacuolar protein sorting-associated protein 53 B (569 aa).

Coiled-coil stretches lie at residues 53-90 (TRAK…VQDI), 125-145 (QVMT…AINE), and 295-316 (KEKS…FERE).

The protein belongs to the VPS53 family. As to quaternary structure, component of the Golgi-associated retrograde protein (GARP) complex.

It is found in the cytoplasm. Its subcellular location is the golgi apparatus. It localises to the trans-Golgi network membrane. The protein localises to the endosome membrane. Involved in retrograde transport from early and late endosomes to late Golgi, leading to the membrane fusion between late Golgi and endosomal vesicles. In Arabidopsis thaliana (Mouse-ear cress), this protein is Vacuolar protein sorting-associated protein 53 B.